We begin with the raw amino-acid sequence, 93 residues long: Progonadoliberin-2 (93 aa).

The N-terminal stretch at 1-24 (MACQRHLLFLLLVLFAVSTQLSHG) is a signal peptide. Pyrrolidone carboxylic acid is present on Gln-25. Glycine amide is present on Gly-34.

Belongs to the GnRH family. Midbrain and hindbrain.

Its subcellular location is the secreted. In terms of biological role, stimulates the secretion of gonadotropins. The polypeptide is Progonadoliberin-2 (gnrh2) (Aquarana catesbeiana (American bullfrog)).